Reading from the N-terminus, the 276-residue chain is Diaminopimelate epimerase (276 aa).

Substrate is bound by residues N13, Q46, and N66. C75 serves as the catalytic Proton donor. Substrate is bound by residues G76–N77, N159, N192, and E210–R211. C219 serves as the catalytic Proton acceptor. G220–S221 is a binding site for substrate.

The protein belongs to the diaminopimelate epimerase family. Homodimer.

It is found in the cytoplasm. The enzyme catalyses (2S,6S)-2,6-diaminopimelate = meso-2,6-diaminopimelate. It functions in the pathway amino-acid biosynthesis; L-lysine biosynthesis via DAP pathway; DL-2,6-diaminopimelate from LL-2,6-diaminopimelate: step 1/1. In terms of biological role, catalyzes the stereoinversion of LL-2,6-diaminopimelate (L,L-DAP) to meso-diaminopimelate (meso-DAP), a precursor of L-lysine and an essential component of the bacterial peptidoglycan. The chain is Diaminopimelate epimerase from Vibrio atlanticus (strain LGP32) (Vibrio splendidus (strain Mel32)).